Here is an 815-residue protein sequence, read N- to C-terminus: TBC1 domain family member 5 (815 aa).

Residue serine 44 is modified to Phosphoserine. A required for interaction with retromer; involved in interaction with ATG8 family proteins region spans residues 56–64 (MKEWEELFV). Residues 57 to 62 (KEWEEL) carry the LIR 1 motif. A Rab-GAP TBC domain is found at 81–359 (LRSSRFRSIC…VVWDALFADS (279 aa)). Arginine 448 carries the asymmetric dimethylarginine; alternate modification. Arginine 448 is subject to Omega-N-methylarginine; alternate. Phosphoserine is present on serine 460. The disordered stretch occupies residues 475-591 (PGSMGGPVPG…SATKKDSFFS (117 aa)). Composition is skewed to low complexity over residues 483–492 (PGNNSSSSFS) and 510–539 (QQQQ…QQQQ). Serine 546, serine 563, serine 565, serine 568, serine 578, and serine 608 each carry phosphoserine. A compositionally biased stretch (low complexity) spans 556-568 (SSKTISSSPSIES). Disordered regions lie at residues 702–733 (SGQD…PDDF) and 754–815 (QPLL…PLDI). Residues 754-765 (QPLLTLRSTSGK) show a composition bias toward polar residues. Over residues 783–796 (PASASASSSNPSSS) the composition is skewed to low complexity. The short motif at 805 to 809 (SGFTI) is the LIR 2 element. The segment at 806–811 (GFTIVS) is required for interaction with ATG8 family proteins. Serine 811 is modified (phosphoserine).

Interacts with MAP1LC3A, MAP1LC3B, MAP1LC3C, GABARAP, GABARAPL1, GABARAPL2. Interacts with VPS29 and VPS35; indicative for an association with retromer CSC subcomplex. MAP1LC3A and VPS29 compete for binding to TBC1D5. Interacts with AP2M1; indicative for an association with the AP2 complex. Interacts with ULK1 and ATG13 (phosphorylated); indicative for an association with the activated ULK1-ATG13-FIP200 complex. Interacts with ATG9A; the interactions seems to be restricted to the AP2-clathrin-associated fraction of ATG9A.

It localises to the endosome membrane. It is found in the cytoplasmic vesicle. Its subcellular location is the autophagosome. Functionally, may act as a GTPase-activating protein for Rab family protein(s). May act as a GAP for RAB7A. Can displace RAB7A and retromer CSC subcomplex from the endosomal membrane to the cytosol; at least retromer displacement seems to require its catalytic activity. Required for retrograde transport of cargo proteins from endosomes to the trans-Golgi network (TGN); the function seems to require its catalytic activity. Involved in regulation of autophagy. May act as a molecular switch between endosomal and autophagosomal transport and is involved in reprogramming vesicle trafficking upon autophagy induction. Involved in the trafficking of ATG9A upon activation of autophagy. May regulate the recruitment of ATG9A-AP2-containing vesicles to autophagic membranes. The polypeptide is TBC1 domain family member 5 (Tbc1d5) (Mus musculus (Mouse)).